The chain runs to 175 residues: Ribosome maturation factor RimM (175 aa).

The region spanning 100–174 (EDEYYWNDVI…VKHKIITVIW (75 aa)) is the PRC barrel domain.

Belongs to the RimM family. In terms of assembly, binds ribosomal protein uS19.

Its subcellular location is the cytoplasm. Its function is as follows. An accessory protein needed during the final step in the assembly of 30S ribosomal subunit, possibly for assembly of the head region. Essential for efficient processing of 16S rRNA. May be needed both before and after RbfA during the maturation of 16S rRNA. It has affinity for free ribosomal 30S subunits but not for 70S ribosomes. The sequence is that of Ribosome maturation factor RimM from Buchnera aphidicola subsp. Schizaphis graminum (strain Sg).